A 493-amino-acid chain; its full sequence is ATP-dependent rRNA helicase RRP3 (493 aa).

2 stretches are compositionally biased toward basic and acidic residues: residues 26 to 42 and 51 to 62; these read ALEN…KDSE and ERPAKKQAKDEK. The disordered stretch occupies residues 26-68; it reads ALENQKKMQAASRKDSESDSSDEEVERPAKKQAKDEKVEEPEE. The short motif at 73–101 is the Q motif element; it reads ESFAQLNLVPELIQACQNLNFTKPTPIQA. The Helicase ATP-binding domain occupies 104–276; sequence IPPALAGSDV…RASLTNPVKC (173 aa). An ATP-binding site is contributed by 117–124; it reads AQTGSGKT. A DEAD box motif is present at residues 223–226; it reads DEAD. The region spanning 307–453 is the Helicase C-terminal domain; that stretch reads LLNEFIGKTV…NIILTLRDSV (147 aa). The interval 467–493 is disordered; it reads RNKEKQARGKGRRGRMMAKENMDREEK. The segment covering 483 to 493 has biased composition (basic and acidic residues); sequence MAKENMDREEK.

It belongs to the DEAD box helicase family. DDX47/RRP3 subfamily. As to quaternary structure, interacts with the SSU processome.

It localises to the nucleus. It catalyses the reaction ATP + H2O = ADP + phosphate + H(+). Its function is as follows. ATP-dependent rRNA helicase required for pre-ribosomal RNA processing. Involved in the maturation of the 35S-pre-rRNA and to its cleavage to mature 18S rRNA. The sequence is that of ATP-dependent rRNA helicase RRP3 from Candida glabrata (strain ATCC 2001 / BCRC 20586 / JCM 3761 / NBRC 0622 / NRRL Y-65 / CBS 138) (Yeast).